The chain runs to 415 residues: MNSLPESGSDGQSSADPSQKATSLPRYGRVIWILAGEASGDVIGARLMQALHAQDPSLVFAGVGGGRMEALGLHSLFPMSDLAVMGLVEVVPRLRQLSQRLLEAVQDIELRKPDLVVTIDSPGFTLRLLQKIERSGIKRVHYVAPQVWAWRENRVKEFPGLWDRLLCLLPFEPDWFAQRGLEGRFVGHPVLQSGVRQGNAQRFRLRHNIPAHAPVVILMPGSRRSEAPRLLPVFRKMLDILRVQYPDICPVIPVAPVIAPTIRQLIRKWPIQPHIVTDIHDKHDAFAAAQCALTKSGTSTLELAMGNVPMAVTYRVNPVTATIARRLIKVPHVAMVNLLAGREVVPELLQENCTPKKLAETVSKLLSDPQMVEKQRMAFADVLDKLSPPVGTPADAAAAEIMDLLNEPVSRSSRS.

The tract at residues 1–21 (MNSLPESGSDGQSSADPSQKA) is disordered.

Belongs to the LpxB family.

The enzyme catalyses a lipid X + a UDP-2-N,3-O-bis[(3R)-3-hydroxyacyl]-alpha-D-glucosamine = a lipid A disaccharide + UDP + H(+). It functions in the pathway bacterial outer membrane biogenesis; LPS lipid A biosynthesis. Functionally, condensation of UDP-2,3-diacylglucosamine and 2,3-diacylglucosamine-1-phosphate to form lipid A disaccharide, a precursor of lipid A, a phosphorylated glycolipid that anchors the lipopolysaccharide to the outer membrane of the cell. The chain is Lipid-A-disaccharide synthase from Gluconobacter oxydans (strain 621H) (Gluconobacter suboxydans).